Reading from the N-terminus, the 336-residue chain is Flavonoid 4'-O-methyltransferase 3 (336 aa).

The S-adenosyl-L-methionine site is built by Y140 and D203. H241 acts as the Proton acceptor in catalysis.

The protein belongs to the class I-like SAM-binding methyltransferase superfamily. Cation-independent O-methyltransferase family. Homodimer. As to expression, expressed in leaves.

It carries out the reaction scutellarein 7-methyl ether + S-adenosyl-L-methionine = ladanein + S-adenosyl-L-homocysteine + H(+). It catalyses the reaction cirsimaritin + S-adenosyl-L-methionine = salvigenin + S-adenosyl-L-homocysteine + H(+). The catalysed reaction is cirsiliol + S-adenosyl-L-methionine = eupatorin + S-adenosyl-L-homocysteine + H(+). The enzyme catalyses genkwanin + S-adenosyl-L-methionine = apigenin 4',7-dimethyl ether + S-adenosyl-L-homocysteine. It functions in the pathway flavonoid metabolism. Its activity is regulated as follows. Substrate inhibition by genkwanin (GENK) at concentrations above 2.5 mM. Functionally, flavonoid 4'-O-methyltransferase involved in the biosynthesis of polymethoxylated flavonoids natural products such as nevadensin and salvigenin, aroma compounds which contribute to the flavor of sweet basil, and exhibit pharmacological activities such as anti-allergic, anti-oxidant, antibacterial, anti-proliferative, and anti-inflammatory effects. Catalyzes S-adenosylmethionine-dependent regioselective 4'-O-methylation of flavonoids; active on various hydroxylated flavonoid substrates, including scutellarein-7-methyl ether (SCU7Me) and cirsimaritin (CIRM), and, with a lower efficiency, hispidulin, ladanein (LAD), cirsioliol (CIRL) and genkwanin (GENK). The protein is Flavonoid 4'-O-methyltransferase 3 of Ocimum basilicum (Sweet basil).